The following is a 505-amino-acid chain: Deoxyguanosinetriphosphate triphosphohydrolase (505 aa).

The HD domain maps to Arg-66 to Cys-273.

Belongs to the dGTPase family. Type 1 subfamily. As to quaternary structure, homotetramer. It depends on Mg(2+) as a cofactor.

The catalysed reaction is dGTP + H2O = 2'-deoxyguanosine + triphosphate + H(+). Functionally, dGTPase preferentially hydrolyzes dGTP over the other canonical NTPs. This is Deoxyguanosinetriphosphate triphosphohydrolase from Yersinia enterocolitica serotype O:8 / biotype 1B (strain NCTC 13174 / 8081).